The following is a 155-amino-acid chain: SsrA-binding protein (155 aa).

The protein belongs to the SmpB family.

It is found in the cytoplasm. Its function is as follows. Required for rescue of stalled ribosomes mediated by trans-translation. Binds to transfer-messenger RNA (tmRNA), required for stable association of tmRNA with ribosomes. tmRNA and SmpB together mimic tRNA shape, replacing the anticodon stem-loop with SmpB. tmRNA is encoded by the ssrA gene; the 2 termini fold to resemble tRNA(Ala) and it encodes a 'tag peptide', a short internal open reading frame. During trans-translation Ala-aminoacylated tmRNA acts like a tRNA, entering the A-site of stalled ribosomes, displacing the stalled mRNA. The ribosome then switches to translate the ORF on the tmRNA; the nascent peptide is terminated with the 'tag peptide' encoded by the tmRNA and targeted for degradation. The ribosome is freed to recommence translation, which seems to be the essential function of trans-translation. This Streptococcus suis (strain 98HAH33) protein is SsrA-binding protein.